We begin with the raw amino-acid sequence, 875 residues long: GATOR2 complex protein MIOS (875 aa).

WD repeat units lie at residues 58–100 (SDTP…NSKF), 111–155 (KHAR…TPDI), 182–221 (GQNDACLSLCWLPRDQKLLLAGMHRNLAIFDLRNTSQKMF), 223–261 (NTKAVQGVTVDPYFHDRVASFYEGQVAIWDLRKFEKPVL), 265–306 (EQPK…TPIG), and 395–437 (RLRA…KQYT). A C4-type zinc finger spans residues 735–781 (VSCNFCGKSISYSCSAVPHQGRGFSQYGVSGSPTKSKVTSCPGCRKP). The Zn(2+) site is built by Cys-737 and Cys-740. Phosphoserine occurs at positions 759 and 766. Zn(2+) is bound by residues Cys-775, Cys-778, Cys-788, Cys-827, Cys-830, His-832, His-835, His-838, Cys-849, Cys-854, and Cys-858. An RING-type; atypical zinc finger spans residues 782 to 863 (LPRCALCLIN…CTCKCMQLDT (82 aa)).

Belongs to the WD repeat mio family. Component of the GATOR2 subcomplex, composed of MIOS, SEC13, SEH1L, WDR24 and WDR59. The GATOR2 complex interacts with CASTOR1 and CASTOR2; the interaction is negatively regulated by arginine. CASTOR1 and CASTOR2 convey leucine availability via direct interaction with MIOS. The GATOR2 complex interacts with SESN1, SESN2 and SESN3; the interaction is negatively regulated by amino acids. Interacts with SAR1A and SAR1B; the interaction is direct, disrupted by leucine and mediates the interaction of SAR1A or SAR1B with the GATOR2 complex to negatively regulate the TORC1 signaling upon leucine deprivation.

It localises to the lysosome membrane. With respect to regulation, the GATOR2 complex is negatively regulated by the upstream amino acid sensors CASTOR1 and SESN2, which sequester the GATOR2 complex in absence of amino acids. In the presence of abundant amino acids, GATOR2 is released from CASTOR1 and SESN2 and activated. In terms of biological role, as a component of the GATOR2 complex, functions as an activator of the amino acid-sensing branch of the mTORC1 signaling pathway. The GATOR2 complex indirectly activates mTORC1 through the inhibition of the GATOR1 subcomplex. GATOR2 probably acts as an E3 ubiquitin-protein ligase toward GATOR1. In the presence of abundant amino acids, the GATOR2 complex mediates ubiquitination of the NPRL2 core component of the GATOR1 complex, leading to GATOR1 inactivation. In the absence of amino acids, GATOR2 is inhibited, activating the GATOR1 complex. Within the GATOR2 complex, MIOS is required to prevent autoubiquitination of WDR24, the catalytic subunit of the complex. The GATOR2 complex is required for brain myelination. The sequence is that of GATOR2 complex protein MIOS from Homo sapiens (Human).